A 729-amino-acid polypeptide reads, in one-letter code: 1,4-alpha-glucan branching enzyme GlgB (729 aa).

Catalysis depends on Asp-407, which acts as the Nucleophile. The active-site Proton donor is the Glu-460.

Belongs to the glycosyl hydrolase 13 family. GlgB subfamily. Monomer.

The catalysed reaction is Transfers a segment of a (1-&gt;4)-alpha-D-glucan chain to a primary hydroxy group in a similar glucan chain.. It participates in glycan biosynthesis; glycogen biosynthesis. Its function is as follows. Catalyzes the formation of the alpha-1,6-glucosidic linkages in glycogen by scission of a 1,4-alpha-linked oligosaccharide from growing alpha-1,4-glucan chains and the subsequent attachment of the oligosaccharide to the alpha-1,6 position. In Pseudoalteromonas atlantica (strain T6c / ATCC BAA-1087), this protein is 1,4-alpha-glucan branching enzyme GlgB.